The primary structure comprises 463 residues: 23S rRNA (uracil(1939)-C(5))-methyltransferase RlmD (463 aa).

The TRAM domain maps to 14–78 (AVAPGSDPVV…PSYEQAHLLE (65 aa)). 4 residues coordinate [4Fe-4S] cluster: Cys-91, Cys-97, Cys-100, and Cys-179. Gln-287, Phe-316, Asn-321, Glu-337, Asn-365, and Asp-386 together coordinate S-adenosyl-L-methionine. The Nucleophile role is filled by Cys-419.

Belongs to the class I-like SAM-binding methyltransferase superfamily. RNA M5U methyltransferase family. RlmD subfamily.

The enzyme catalyses uridine(1939) in 23S rRNA + S-adenosyl-L-methionine = 5-methyluridine(1939) in 23S rRNA + S-adenosyl-L-homocysteine + H(+). In terms of biological role, catalyzes the formation of 5-methyl-uridine at position 1939 (m5U1939) in 23S rRNA. The sequence is that of 23S rRNA (uracil(1939)-C(5))-methyltransferase RlmD from Cupriavidus pinatubonensis (strain JMP 134 / LMG 1197) (Cupriavidus necator (strain JMP 134)).